Consider the following 397-residue polypeptide: Chorismate synthase (397 aa).

Residues arginine 40 and arginine 46 each contribute to the NADP(+) site. Residues 129 to 131 (RSS), 257 to 258 (QA), glycine 302, 317 to 321 (KPISS), and arginine 343 each bind FMN.

This sequence belongs to the chorismate synthase family. In terms of assembly, homotetramer. It depends on FMNH2 as a cofactor.

It carries out the reaction 5-O-(1-carboxyvinyl)-3-phosphoshikimate = chorismate + phosphate. It functions in the pathway metabolic intermediate biosynthesis; chorismate biosynthesis; chorismate from D-erythrose 4-phosphate and phosphoenolpyruvate: step 7/7. Functionally, catalyzes the anti-1,4-elimination of the C-3 phosphate and the C-6 proR hydrogen from 5-enolpyruvylshikimate-3-phosphate (EPSP) to yield chorismate, which is the branch point compound that serves as the starting substrate for the three terminal pathways of aromatic amino acid biosynthesis. This reaction introduces a second double bond into the aromatic ring system. This chain is Chorismate synthase, found in Chlorobium phaeobacteroides (strain DSM 266 / SMG 266 / 2430).